The following is a 137-amino-acid chain: Basic phospholipase A2 beta-bungarotoxin A5 chain (137 aa).

An N-terminal signal peptide occupies residues 1-9; sequence AVCVSLLGA. Residues 10 to 17 constitute a propeptide that is removed on maturation; that stretch reads ANIPPQHL. 6 cysteine pairs are disulfide-bonded: cysteine 44-cysteine 136, cysteine 46-cysteine 62, cysteine 61-cysteine 117, cysteine 68-cysteine 110, cysteine 78-cysteine 103, and cysteine 96-cysteine 108. Residues tyrosine 45, glycine 47, and glycine 49 each contribute to the Ca(2+) site. The active site involves histidine 65. Aspartate 66 serves as a coordination point for Ca(2+). Residue aspartate 111 is part of the active site.

The protein belongs to the phospholipase A2 family. Group I subfamily. D49 sub-subfamily. In terms of assembly, heterodimer; disulfide-linked. The A chains have phospholipase A2 activity and the B chains show homology with the basic protease inhibitors. The cofactor is Ca(2+). In terms of tissue distribution, expressed by the venom gland.

It localises to the secreted. It catalyses the reaction a 1,2-diacyl-sn-glycero-3-phosphocholine + H2O = a 1-acyl-sn-glycero-3-phosphocholine + a fatty acid + H(+). Its function is as follows. Snake venom phospholipase A2 (PLA2) that inhibits neuromuscular transmission by blocking acetylcholine release from the nerve termini. PLA2 catalyzes the calcium-dependent hydrolysis of the 2-acyl groups in 3-sn-phosphoglycerides. The chain is Basic phospholipase A2 beta-bungarotoxin A5 chain from Bungarus multicinctus (Many-banded krait).